The chain runs to 127 residues: Alkaline proteinase inhibitor (127 aa).

A signal peptide spans 1–26; the sequence is MNINYFVRIVPVAVVLLVGISGASMA. Cys-53 and Cys-70 are oxidised to a cystine.

Belongs to the protease inhibitor I38 family.

It localises to the periplasm. Inhibitor of the alkaline protease. The polypeptide is Alkaline proteinase inhibitor (inh) (Pseudomonas syringae pv. tomato (strain ATCC BAA-871 / DC3000)).